The chain runs to 643 residues: ATP-dependent RNA helicase DeaD (643 aa).

The short motif at 6-34 (TTFADLGLKAPILEALTDLGYEKPSPIQA) is the Q motif element. In terms of domain architecture, Helicase ATP-binding spans 37–208 (IPHLLDGRDV…RRFMKEPQEV (172 aa)). 50 to 57 (AQTGSGKT) is an ATP binding site. Positions 156–159 (DEAD) match the DEAD box motif. One can recognise a Helicase C-terminal domain in the interval 232–379 (KNEALVRFLE…EVELPNAELL (148 aa)). Disordered regions lie at residues 440-482 (VPPV…KRER) and 557-643 (MNMQ…GGDA). Composition is skewed to basic and acidic residues over residues 448-482 (PRREFRDRDDSFDRRGDRNDRGPRGDREDRPKRER) and 567-643 (PRTE…GGDA).

The protein belongs to the DEAD box helicase family. DeaD/CsdA subfamily.

It is found in the cytoplasm. It catalyses the reaction ATP + H2O = ADP + phosphate + H(+). Its function is as follows. DEAD-box RNA helicase involved in various cellular processes at low temperature, including ribosome biogenesis, mRNA degradation and translation initiation. In Klebsiella pneumoniae, this protein is ATP-dependent RNA helicase DeaD.